Consider the following 68-residue polypeptide: MFTVFLLVVLATTVVSFTSDRASDDRNTNDKASRLLSHVVRGCCGSYPNAACHPCSCKDRPSYCGQGR.

The N-terminal stretch at 1-16 (MFTVFLLVVLATTVVS) is a signal peptide. Positions 17–41 (FTSDRASDDRNTNDKASRLLSHVVR) are excised as a propeptide. Intrachain disulfides connect C43-C57, C44-C52, and C55-C64. Residues P48 and P54 each carry the 4-hydroxyproline; partial modification. At P61 the chain carries 4-hydroxyproline. Q66 carries the post-translational modification Glutamine amide.

This sequence belongs to the conotoxin A superfamily. In terms of tissue distribution, expressed by the venom duct.

Its subcellular location is the secreted. In terms of biological role, alpha-conotoxins act on postsynaptic membranes, they bind to the nicotinic acetylcholine receptors (nAChR) and thus inhibit them. This toxin has higher affinity for the adult subtype (alpha-1-beta-1-gamma-delta (CHRNA1-CHRNB1-CHRNG-CHRND) subunits) (IC(50)=2.3 nM) of the receptor than for the fetal subtype (alpha-1-beta-1-epsilon-delta (CHRNA1-CHRNB1-CHRND-CHRNE) subunits) (IC(50)=22 nM). The protein is Alpha-conotoxin PIVA of Conus purpurascens (Purple cone).